The primary structure comprises 369 residues: Anhydro-N-acetylmuramic acid kinase (369 aa).

Position 12–19 (12–19) interacts with ATP; it reads GTSMDGVD.

Belongs to the anhydro-N-acetylmuramic acid kinase family.

It carries out the reaction 1,6-anhydro-N-acetyl-beta-muramate + ATP + H2O = N-acetyl-D-muramate 6-phosphate + ADP + H(+). It participates in amino-sugar metabolism; 1,6-anhydro-N-acetylmuramate degradation. It functions in the pathway cell wall biogenesis; peptidoglycan recycling. Catalyzes the specific phosphorylation of 1,6-anhydro-N-acetylmuramic acid (anhMurNAc) with the simultaneous cleavage of the 1,6-anhydro ring, generating MurNAc-6-P. Is required for the utilization of anhMurNAc either imported from the medium or derived from its own cell wall murein, and thus plays a role in cell wall recycling. The protein is Anhydro-N-acetylmuramic acid kinase of Shewanella pealeana (strain ATCC 700345 / ANG-SQ1).